The following is a 113-amino-acid chain: Large ribosomal subunit protein uL22 (113 aa).

The protein belongs to the universal ribosomal protein uL22 family. As to quaternary structure, part of the 50S ribosomal subunit.

This protein binds specifically to 23S rRNA; its binding is stimulated by other ribosomal proteins, e.g. L4, L17, and L20. It is important during the early stages of 50S assembly. It makes multiple contacts with different domains of the 23S rRNA in the assembled 50S subunit and ribosome. In terms of biological role, the globular domain of the protein is located near the polypeptide exit tunnel on the outside of the subunit, while an extended beta-hairpin is found that lines the wall of the exit tunnel in the center of the 70S ribosome. The polypeptide is Large ribosomal subunit protein uL22 (Symbiobacterium thermophilum (strain DSM 24528 / JCM 14929 / IAM 14863 / T)).